Consider the following 156-residue polypeptide: Small ribosomal subunit protein uS7 (156 aa).

This sequence belongs to the universal ribosomal protein uS7 family. Part of the 30S ribosomal subunit. Contacts proteins S9 and S11.

One of the primary rRNA binding proteins, it binds directly to 16S rRNA where it nucleates assembly of the head domain of the 30S subunit. Is located at the subunit interface close to the decoding center, probably blocks exit of the E-site tRNA. The sequence is that of Small ribosomal subunit protein uS7 from Thermodesulfovibrio yellowstonii (strain ATCC 51303 / DSM 11347 / YP87).